Here is a 383-residue protein sequence, read N- to C-terminus: tRNA (adenine(58)-N(1))-methyltransferase catalytic subunit TRM61 (383 aa).

Residues V94, 121–124, E139, R144, 168–169, and D203 contribute to the S-adenosyl-L-methionine site; these read SGSF and DV. Phosphoserine is present on S302.

The protein belongs to the class I-like SAM-binding methyltransferase superfamily. TRM61 family. As to quaternary structure, heterotetramer; composed of two copies of TRM6/GCD10 and two copies of TRM61/GCD14.

Its subcellular location is the nucleus. It carries out the reaction adenosine(58) in tRNA + S-adenosyl-L-methionine = N(1)-methyladenosine(58) in tRNA + S-adenosyl-L-homocysteine + H(+). Catalytic subunit of tRNA (adenine-N(1)-)-methyltransferase, which catalyzes the formation of N(1)-methyladenine at position 58 (m1A58) in initiator methionyl-tRNA. GCD14 is also required for repression of GCN4 mRNA translation by the upstream open reading frames (uORFs) under conditions of amino acid sufficiency. The protein is tRNA (adenine(58)-N(1))-methyltransferase catalytic subunit TRM61 (GCD14) of Saccharomyces cerevisiae (strain ATCC 204508 / S288c) (Baker's yeast).